A 322-amino-acid chain; its full sequence is Ethylmalonyl-CoA decarboxylase (322 aa).

An N6-acetyllysine; alternate modification is found at Lys-232. N6-succinyllysine; alternate is present on Lys-232. Residue Lys-316 is modified to N6-succinyllysine.

The protein belongs to the enoyl-CoA hydratase/isomerase family.

The protein resides in the cytoplasm. It localises to the cytosol. The catalysed reaction is (2S)-ethylmalonyl-CoA + H(+) = butanoyl-CoA + CO2. It carries out the reaction (S)-methylmalonyl-CoA + H(+) = propanoyl-CoA + CO2. It catalyses the reaction (2R)-ethylmalonyl-CoA + H(+) = butanoyl-CoA + CO2. In terms of biological role, decarboxylates ethylmalonyl-CoA, a potentially toxic metabolite, to form butyryl-CoA, suggesting it might be involved in metabolite proofreading. Acts preferentially on (S)-ethylmalonyl-CoA but also has some activity on the (R)-isomer. Also has methylmalonyl-CoA decarboxylase activity at lower level. The chain is Ethylmalonyl-CoA decarboxylase (Echdc1) from Mus musculus (Mouse).